A 175-amino-acid chain; its full sequence is Ribosome-binding factor A (175 aa).

A disordered region spans residues 125 to 175 (TAKHAGEADPYKSDAPEDVDIDEDDFDEEDIDLAGDDDIDEDANKDADSSK). Positions 128 to 139 (HAGEADPYKSDA) are enriched in basic and acidic residues. A compositionally biased stretch (acidic residues) spans 140–165 (PEDVDIDEDDFDEEDIDLAGDDDIDE). Residues 166–175 (DANKDADSSK) are compositionally biased toward basic and acidic residues.

This sequence belongs to the RbfA family. Monomer. Binds 30S ribosomal subunits, but not 50S ribosomal subunits or 70S ribosomes.

Its subcellular location is the cytoplasm. Its function is as follows. One of several proteins that assist in the late maturation steps of the functional core of the 30S ribosomal subunit. Associates with free 30S ribosomal subunits (but not with 30S subunits that are part of 70S ribosomes or polysomes). Required for efficient processing of 16S rRNA. May interact with the 5'-terminal helix region of 16S rRNA. This is Ribosome-binding factor A from Pseudarthrobacter chlorophenolicus (strain ATCC 700700 / DSM 12829 / CIP 107037 / JCM 12360 / KCTC 9906 / NCIMB 13794 / A6) (Arthrobacter chlorophenolicus).